We begin with the raw amino-acid sequence, 418 residues long: CinA-like protein (418 aa).

The protein belongs to the CinA family.

This is CinA-like protein from Cytophaga hutchinsonii (strain ATCC 33406 / DSM 1761 / CIP 103989 / NBRC 15051 / NCIMB 9469 / D465).